Here is a 101-residue protein sequence, read N- to C-terminus: UPF0473 protein STER_1939 (101 aa).

This sequence belongs to the UPF0473 family.

The protein is UPF0473 protein STER_1939 of Streptococcus thermophilus (strain ATCC BAA-491 / LMD-9).